Reading from the N-terminus, the 226-residue chain is ATP-dependent dethiobiotin synthetase BioD (226 aa).

Position 14–19 (14–19) interacts with ATP; sequence GIGKTF. Mg(2+) is bound at residue threonine 18. Lysine 39 is a catalytic residue. Serine 43 contributes to the substrate binding site. ATP-binding positions include aspartate 56, 117–120, 177–178, 206–208, and asparagine 213; these read EGVG, NT, and PHI. Positions 56 and 117 each coordinate Mg(2+).

This sequence belongs to the dethiobiotin synthetase family. As to quaternary structure, homodimer. The cofactor is Mg(2+).

The protein localises to the cytoplasm. The enzyme catalyses (7R,8S)-7,8-diammoniononanoate + CO2 + ATP = (4R,5S)-dethiobiotin + ADP + phosphate + 3 H(+). It functions in the pathway cofactor biosynthesis; biotin biosynthesis; biotin from 7,8-diaminononanoate: step 1/2. In terms of biological role, catalyzes a mechanistically unusual reaction, the ATP-dependent insertion of CO2 between the N7 and N8 nitrogen atoms of 7,8-diaminopelargonic acid (DAPA, also called 7,8-diammoniononanoate) to form a ureido ring. The chain is ATP-dependent dethiobiotin synthetase BioD from Xylella fastidiosa (strain 9a5c).